Here is a 150-residue protein sequence, read N- to C-terminus: Large ribosomal subunit protein bL9 (150 aa).

It belongs to the bacterial ribosomal protein bL9 family.

Functionally, binds to the 23S rRNA. The protein is Large ribosomal subunit protein bL9 of Pseudarthrobacter chlorophenolicus (strain ATCC 700700 / DSM 12829 / CIP 107037 / JCM 12360 / KCTC 9906 / NCIMB 13794 / A6) (Arthrobacter chlorophenolicus).